The following is a 212-amino-acid chain: F-box protein GID2 (212 aa).

A disordered region spans residues 1–74 (MKFRSDSSGG…AGEGEQPRVP (74 aa)). A compositionally biased stretch (low complexity) spans 35–59 (DPSSSSSQGEASSSSQPPPQQQQEE). In terms of domain architecture, F-box spans 70–116 (QPRVPDLGEDLVFEVLRRAEARTLAAAACVSRGWRQLAEDERLWEAA).

Part of some SCF(GID2) complex, which consist of a SKP1 protein, CUL1, GID2 and some RING box protein. Interacts directly with SKP2 and SKP15. Interacts directly with DELLA protein SLR1. May have a higher affinity for phosphorylated SLR1 proteins. Widely expressed. Preferentially expressed in unopened flowers, shoot apices and elongation stem. Expressed at lower level in the leaf blades, leaf sheaths, roots and rachis.

The protein resides in the nucleus. It participates in protein modification; protein ubiquitination. In terms of biological role, essential component of some SCF-type E3 ligase complex that positively regulates the gibberellin signaling pathway. Upon gibberellin treatment, the complex mediates the ubiquitination and subsequent degradation of DELLA protein SLR1, a repressor of the gibberellin pathway, leading to activate the pathway. In Oryza sativa subsp. japonica (Rice), this protein is F-box protein GID2 (GID2).